Consider the following 226-residue polypeptide: Phosphatidylserine decarboxylase proenzyme (226 aa).

Serine 184 (schiff-base intermediate with substrate; via pyruvic acid) is an active-site residue. A Pyruvic acid (Ser); by autocatalysis modification is found at serine 184.

Belongs to the phosphatidylserine decarboxylase family. PSD-A subfamily. In terms of assembly, heterodimer of a large membrane-associated beta subunit and a small pyruvoyl-containing alpha subunit. The cofactor is pyruvate. Post-translationally, is synthesized initially as an inactive proenzyme. Formation of the active enzyme involves a self-maturation process in which the active site pyruvoyl group is generated from an internal serine residue via an autocatalytic post-translational modification. Two non-identical subunits are generated from the proenzyme in this reaction, and the pyruvate is formed at the N-terminus of the alpha chain, which is derived from the carboxyl end of the proenzyme. The post-translation cleavage follows an unusual pathway, termed non-hydrolytic serinolysis, in which the side chain hydroxyl group of the serine supplies its oxygen atom to form the C-terminus of the beta chain, while the remainder of the serine residue undergoes an oxidative deamination to produce ammonia and the pyruvoyl prosthetic group on the alpha chain.

Its subcellular location is the cell membrane. The catalysed reaction is a 1,2-diacyl-sn-glycero-3-phospho-L-serine + H(+) = a 1,2-diacyl-sn-glycero-3-phosphoethanolamine + CO2. The protein operates within phospholipid metabolism; phosphatidylethanolamine biosynthesis; phosphatidylethanolamine from CDP-diacylglycerol: step 2/2. Its function is as follows. Catalyzes the formation of phosphatidylethanolamine (PtdEtn) from phosphatidylserine (PtdSer). The sequence is that of Phosphatidylserine decarboxylase proenzyme from Ehrlichia chaffeensis (strain ATCC CRL-10679 / Arkansas).